A 191-amino-acid polypeptide reads, in one-letter code: Ribonuclease HII (191 aa).

One can recognise an RNase H type-2 domain in the interval 7–191; that stretch reads ILMAGVDEVG…YSPVADLISK (185 aa). Residues D13, E14, and D103 each coordinate a divalent metal cation.

It belongs to the RNase HII family. Mn(2+) is required as a cofactor. Requires Mg(2+) as cofactor.

The protein resides in the cytoplasm. It carries out the reaction Endonucleolytic cleavage to 5'-phosphomonoester.. In terms of biological role, endonuclease that specifically degrades the RNA of RNA-DNA hybrids. The chain is Ribonuclease HII from Legionella pneumophila (strain Corby).